Here is a 364-residue protein sequence, read N- to C-terminus: Aminomethyltransferase (364 aa).

It belongs to the GcvT family. The glycine cleavage system is composed of four proteins: P, T, L and H.

It catalyses the reaction N(6)-[(R)-S(8)-aminomethyldihydrolipoyl]-L-lysyl-[protein] + (6S)-5,6,7,8-tetrahydrofolate = N(6)-[(R)-dihydrolipoyl]-L-lysyl-[protein] + (6R)-5,10-methylene-5,6,7,8-tetrahydrofolate + NH4(+). Functionally, the glycine cleavage system catalyzes the degradation of glycine. The polypeptide is Aminomethyltransferase (Photorhabdus laumondii subsp. laumondii (strain DSM 15139 / CIP 105565 / TT01) (Photorhabdus luminescens subsp. laumondii)).